A 158-amino-acid polypeptide reads, in one-letter code: Endoribonuclease YbeY (158 aa).

Positions 118, 122, and 128 each coordinate Zn(2+).

It belongs to the endoribonuclease YbeY family. Zn(2+) serves as cofactor.

Its subcellular location is the cytoplasm. Single strand-specific metallo-endoribonuclease involved in late-stage 70S ribosome quality control and in maturation of the 3' terminus of the 16S rRNA. The polypeptide is Endoribonuclease YbeY (Alteromonas mediterranea (strain DSM 17117 / CIP 110805 / LMG 28347 / Deep ecotype)).